The primary structure comprises 198 residues: Cell division protein SepF (198 aa).

Residues 170 to 198 (EVPQPPARPARPASTNPPAWGNETNRMAQ) form a disordered region. The segment covering 179 to 188 (ARPASTNPPA) has biased composition (low complexity).

It belongs to the SepF family. In terms of assembly, homodimer. Interacts with FtsZ.

It is found in the cytoplasm. Functionally, cell division protein that is part of the divisome complex and is recruited early to the Z-ring. Probably stimulates Z-ring formation, perhaps through the cross-linking of FtsZ protofilaments. Its function overlaps with FtsA. This is Cell division protein SepF from Nostoc sp. (strain PCC 7120 / SAG 25.82 / UTEX 2576).